The sequence spans 305 residues: UDP-3-O-acyl-N-acetylglucosamine deacetylase (305 aa).

Positions 79, 238, and 242 each coordinate Zn(2+). His-265 acts as the Proton donor in catalysis.

It belongs to the LpxC family. The cofactor is Zn(2+).

It catalyses the reaction a UDP-3-O-[(3R)-3-hydroxyacyl]-N-acetyl-alpha-D-glucosamine + H2O = a UDP-3-O-[(3R)-3-hydroxyacyl]-alpha-D-glucosamine + acetate. It participates in glycolipid biosynthesis; lipid IV(A) biosynthesis; lipid IV(A) from (3R)-3-hydroxytetradecanoyl-[acyl-carrier-protein] and UDP-N-acetyl-alpha-D-glucosamine: step 2/6. Functionally, catalyzes the hydrolysis of UDP-3-O-myristoyl-N-acetylglucosamine to form UDP-3-O-myristoylglucosamine and acetate, the committed step in lipid A biosynthesis. In Haemophilus influenzae (strain 86-028NP), this protein is UDP-3-O-acyl-N-acetylglucosamine deacetylase.